Consider the following 181-residue polypeptide: ATP synthase subunit delta (181 aa).

This sequence belongs to the ATPase delta chain family. In terms of assembly, F-type ATPases have 2 components, F(1) - the catalytic core - and F(0) - the membrane proton channel. F(1) has five subunits: alpha(3), beta(3), gamma(1), delta(1), epsilon(1). F(0) has three main subunits: a(1), b(2) and c(10-14). The alpha and beta chains form an alternating ring which encloses part of the gamma chain. F(1) is attached to F(0) by a central stalk formed by the gamma and epsilon chains, while a peripheral stalk is formed by the delta and b chains.

The protein localises to the cell inner membrane. Its function is as follows. F(1)F(0) ATP synthase produces ATP from ADP in the presence of a proton or sodium gradient. F-type ATPases consist of two structural domains, F(1) containing the extramembraneous catalytic core and F(0) containing the membrane proton channel, linked together by a central stalk and a peripheral stalk. During catalysis, ATP synthesis in the catalytic domain of F(1) is coupled via a rotary mechanism of the central stalk subunits to proton translocation. In terms of biological role, this protein is part of the stalk that links CF(0) to CF(1). It either transmits conformational changes from CF(0) to CF(1) or is implicated in proton conduction. This is ATP synthase subunit delta from Syntrophus aciditrophicus (strain SB).